We begin with the raw amino-acid sequence, 269 residues long: 3-methyl-2-oxobutanoate hydroxymethyltransferase (269 aa).

Residues D43 and D82 each coordinate Mg(2+). 3-methyl-2-oxobutanoate contacts are provided by residues 43 to 44, D82, and K110; that span reads DS. E112 contributes to the Mg(2+) binding site. The active-site Proton acceptor is the E179.

This sequence belongs to the PanB family. As to quaternary structure, homodecamer; pentamer of dimers. Mg(2+) serves as cofactor.

The protein resides in the cytoplasm. The catalysed reaction is 3-methyl-2-oxobutanoate + (6R)-5,10-methylene-5,6,7,8-tetrahydrofolate + H2O = 2-dehydropantoate + (6S)-5,6,7,8-tetrahydrofolate. It functions in the pathway cofactor biosynthesis; (R)-pantothenate biosynthesis; (R)-pantoate from 3-methyl-2-oxobutanoate: step 1/2. Functionally, catalyzes the reversible reaction in which hydroxymethyl group from 5,10-methylenetetrahydrofolate is transferred onto alpha-ketoisovalerate to form ketopantoate. This Acinetobacter baumannii (strain AB307-0294) protein is 3-methyl-2-oxobutanoate hydroxymethyltransferase.